A 338-amino-acid polypeptide reads, in one-letter code: Ketol-acid reductoisomerase (NADP(+)) (338 aa).

Positions Thr-2–Thr-182 constitute a KARI N-terminal Rossmann domain. Residues Tyr-25 to Gln-28, Ser-51, Ser-53, and Asp-83 to Gln-86 each bind NADP(+). The active site involves His-108. Residue Gly-134 coordinates NADP(+). Residues Thr-183–Asn-330 enclose the KARI C-terminal knotted domain. Residues Asp-191, Glu-195, Glu-227, and Glu-231 each contribute to the Mg(2+) site. Ser-252 lines the substrate pocket.

The protein belongs to the ketol-acid reductoisomerase family. Mg(2+) is required as a cofactor.

It carries out the reaction (2R)-2,3-dihydroxy-3-methylbutanoate + NADP(+) = (2S)-2-acetolactate + NADPH + H(+). It catalyses the reaction (2R,3R)-2,3-dihydroxy-3-methylpentanoate + NADP(+) = (S)-2-ethyl-2-hydroxy-3-oxobutanoate + NADPH + H(+). Its pathway is amino-acid biosynthesis; L-isoleucine biosynthesis; L-isoleucine from 2-oxobutanoate: step 2/4. The protein operates within amino-acid biosynthesis; L-valine biosynthesis; L-valine from pyruvate: step 2/4. In terms of biological role, involved in the biosynthesis of branched-chain amino acids (BCAA). Catalyzes an alkyl-migration followed by a ketol-acid reduction of (S)-2-acetolactate (S2AL) to yield (R)-2,3-dihydroxy-isovalerate. In the isomerase reaction, S2AL is rearranged via a Mg-dependent methyl migration to produce 3-hydroxy-3-methyl-2-ketobutyrate (HMKB). In the reductase reaction, this 2-ketoacid undergoes a metal-dependent reduction by NADPH to yield (R)-2,3-dihydroxy-isovalerate. The protein is Ketol-acid reductoisomerase (NADP(+)) of Clostridium botulinum (strain Alaska E43 / Type E3).